We begin with the raw amino-acid sequence, 124 residues long: Small ribosomal subunit protein uS13 (124 aa).

The interval 94–124 is disordered; sequence GLPLRGQRTKNNSRTRKGKRKTVANKKKATK. Residues 100–124 show a composition bias toward basic residues; that stretch reads QRTKNNSRTRKGKRKTVANKKKATK.

It belongs to the universal ribosomal protein uS13 family. As to quaternary structure, part of the 30S ribosomal subunit. Forms a loose heterodimer with protein S19. Forms two bridges to the 50S subunit in the 70S ribosome.

Its function is as follows. Located at the top of the head of the 30S subunit, it contacts several helices of the 16S rRNA. In the 70S ribosome it contacts the 23S rRNA (bridge B1a) and protein L5 of the 50S subunit (bridge B1b), connecting the 2 subunits; these bridges are implicated in subunit movement. Contacts the tRNAs in the A and P-sites. This chain is Small ribosomal subunit protein uS13, found in Flavobacterium psychrophilum (strain ATCC 49511 / DSM 21280 / CIP 103535 / JIP02/86).